A 161-amino-acid polypeptide reads, in one-letter code: RNA pyrophosphohydrolase (161 aa).

One can recognise a Nudix hydrolase domain in the interval 12 to 154 (PYRPGVGMMI…KRKLYQAVVK (143 aa)). Residues 46-67 (GGIVPGETPSIAAMREMLEEIG) carry the Nudix box motif.

Belongs to the Nudix hydrolase family. RppH subfamily. A divalent metal cation serves as cofactor.

In terms of biological role, accelerates the degradation of transcripts by removing pyrophosphate from the 5'-end of triphosphorylated RNA, leading to a more labile monophosphorylated state that can stimulate subsequent ribonuclease cleavage. The polypeptide is RNA pyrophosphohydrolase (Rickettsia typhi (strain ATCC VR-144 / Wilmington)).